Consider the following 418-residue polypeptide: Tyrosine--tRNA ligase (418 aa).

Tyr-34 contributes to the L-tyrosine binding site. The 'HIGH' region motif lies at 39–48; the sequence is PTADSLHLGH. Residues Tyr-169 and Gln-173 each contribute to the L-tyrosine site. The 'KMSKS' region motif lies at 229-233; that stretch reads KFGKS. Position 232 (Lys-232) interacts with ATP. An S4 RNA-binding domain is found at 352–418; sequence LNLVDMLVTA…GKKKYAVLTY (67 aa).

Belongs to the class-I aminoacyl-tRNA synthetase family. TyrS type 1 subfamily. Homodimer.

The protein localises to the cytoplasm. The enzyme catalyses tRNA(Tyr) + L-tyrosine + ATP = L-tyrosyl-tRNA(Tyr) + AMP + diphosphate + H(+). Catalyzes the attachment of tyrosine to tRNA(Tyr) in a two-step reaction: tyrosine is first activated by ATP to form Tyr-AMP and then transferred to the acceptor end of tRNA(Tyr). The sequence is that of Tyrosine--tRNA ligase from Streptococcus pyogenes serotype M12 (strain MGAS2096).